The chain runs to 91 residues: Small ribosomal subunit protein bS20 (91 aa).

A disordered region spans residues 1-23 (MANTSSAKKATRKIARRTEVNKA).

Belongs to the bacterial ribosomal protein bS20 family.

Its function is as follows. Binds directly to 16S ribosomal RNA. The sequence is that of Small ribosomal subunit protein bS20 from Rhizobium rhizogenes (strain K84 / ATCC BAA-868) (Agrobacterium radiobacter).